Here is a 102-residue protein sequence, read N- to C-terminus: MYAIIETGGKQFRVEEGCKIFVEKLAADAGSEIAIDKVLMLGGDKFAVGAPYVENAKVTAEVIEHGRGEKVITFRKWRRNDSRKKQGHRQDYTALKIKTITA.

It belongs to the bacterial ribosomal protein bL21 family. As to quaternary structure, part of the 50S ribosomal subunit. Contacts protein L20.

In terms of biological role, this protein binds to 23S rRNA in the presence of protein L20. In Oleidesulfovibrio alaskensis (strain ATCC BAA-1058 / DSM 17464 / G20) (Desulfovibrio alaskensis), this protein is Large ribosomal subunit protein bL21.